We begin with the raw amino-acid sequence, 77 residues long: Putative defensin-like protein 30 (77 aa).

Positions 1-26 are cleaved as a signal peptide; the sequence is MASSSKCAFLVFLCMIVLLAPSEVHA. Cystine bridges form between Cys43–Cys63, Cys49–Cys72, and Cys53–Cys74.

This sequence belongs to the DEFL family.

It localises to the secreted. The chain is Putative defensin-like protein 30 from Arabidopsis thaliana (Mouse-ear cress).